A 200-amino-acid chain; its full sequence is Ribosome maturation factor RimM (200 aa).

The 79-residue stretch at 103-181 folds into the PRC barrel domain; that stretch reads KEGEYYFYQL…KIVAKRLEYL (79 aa).

Belongs to the RimM family. Binds ribosomal protein uS19.

It localises to the cytoplasm. Its function is as follows. An accessory protein needed during the final step in the assembly of 30S ribosomal subunit, possibly for assembly of the head region. Essential for efficient processing of 16S rRNA. May be needed both before and after RbfA during the maturation of 16S rRNA. It has affinity for free ribosomal 30S subunits but not for 70S ribosomes. This Kosmotoga olearia (strain ATCC BAA-1733 / DSM 21960 / TBF 19.5.1) protein is Ribosome maturation factor RimM.